The following is a 244-amino-acid chain: Mono-ADP-ribosyltransferase C3 (244 aa).

Residues methionine 1 to glycine 40 form the signal peptide. The TR mART core domain maps to aspartate 44–lysine 244. NAD(+) contacts are provided by residues threonine 80, asparagine 87, arginine 91, arginine 128 to aspartate 131, and arginine 167 to glutamate 169. Residue arginine 128 is part of the active site. The active site involves serine 174. NAD(+)-binding positions include phenylalanine 182–arginine 185 and glutamine 211–glutamate 213. The active site involves glutamate 213.

It to exoenzymes 3 of C.limosum and C.botulinum D phage, and to S.aureus ediN. As to quaternary structure, monomer.

It localises to the secreted. The catalysed reaction is L-asparaginyl-[protein] + NAD(+) = N(4)-(ADP-D-ribosyl)-L-asparaginyl-[protein] + nicotinamide + H(+). Its function is as follows. ADP-ribosylates eukaryotic Rho and Rac proteins on an asparagine residue. The chain is Mono-ADP-ribosyltransferase C3 from Clostridium botulinum C phage (Clostridium botulinum C bacteriophage).